We begin with the raw amino-acid sequence, 450 residues long: Interferon-related developmental regulator 1 (450 aa).

The segment covering 1–10 has biased composition (basic residues); sequence MPKNKKRNTP. Residues 1–46 are disordered; that stretch reads MPKNKKRNTPHRGGSGGGGSGAAATTAATAGGQHRNVQPFSDEDAS. Positions 22-32 are enriched in low complexity; it reads AAATTAATAGG.

It belongs to the IFRD family. Interacts with PSIP1/LEDGF.

Its function is as follows. Could play a role in regulating gene activity in the proliferative and/or differentiative pathways induced by NGF. May be an autocrine factor that attenuates or amplifies the initial ligand-induced signal. This Sus scrofa (Pig) protein is Interferon-related developmental regulator 1 (IFRD1).